Here is a 111-residue protein sequence, read N- to C-terminus: uncharacterized protein (111 aa).

2 consecutive transmembrane segments (helical) span residues 29 to 49 (LLNFFIFFSLHLCALFLATAV) and 52 to 72 (ACFACFVLFRHAILLLFYLLA).

The protein resides in the membrane. This is an uncharacterized protein from Saccharomyces cerevisiae (strain ATCC 204508 / S288c) (Baker's yeast).